A 165-amino-acid polypeptide reads, in one-letter code: 3-isopropylmalate dehydratase small subunit (165 aa).

It belongs to the LeuD family. LeuD type 2 subfamily. As to quaternary structure, heterodimer of LeuC and LeuD.

It carries out the reaction (2R,3S)-3-isopropylmalate = (2S)-2-isopropylmalate. It functions in the pathway amino-acid biosynthesis; L-leucine biosynthesis; L-leucine from 3-methyl-2-oxobutanoate: step 2/4. Functionally, catalyzes the isomerization between 2-isopropylmalate and 3-isopropylmalate, via the formation of 2-isopropylmaleate. The protein is 3-isopropylmalate dehydratase small subunit of Desulfovibrio desulfuricans (strain ATCC 27774 / DSM 6949 / MB).